The following is a 78-amino-acid chain: Probable [Fe-S]-dependent transcriptional repressor (78 aa).

Iron-sulfur cluster-binding residues include C56, C61, C64, and C70.

This sequence belongs to the FeoC family.

Its function is as follows. May function as a transcriptional regulator that controls feoABC expression. This is Probable [Fe-S]-dependent transcriptional repressor from Salmonella agona (strain SL483).